The sequence spans 212 residues: dTTP/UTP pyrophosphatase (212 aa).

D88 (proton acceptor) is an active-site residue.

This sequence belongs to the Maf family. YhdE subfamily. A divalent metal cation is required as a cofactor.

It localises to the cytoplasm. It catalyses the reaction dTTP + H2O = dTMP + diphosphate + H(+). It carries out the reaction UTP + H2O = UMP + diphosphate + H(+). Its function is as follows. Nucleoside triphosphate pyrophosphatase that hydrolyzes dTTP and UTP. May have a dual role in cell division arrest and in preventing the incorporation of modified nucleotides into cellular nucleic acids. This is dTTP/UTP pyrophosphatase from Colwellia psychrerythraea (strain 34H / ATCC BAA-681) (Vibrio psychroerythus).